A 565-amino-acid chain; its full sequence is Molybdenum cofactor biosynthesis protein 1 (565 aa).

The tract at residues 3-367 (LLARHAIRLL…AVQRKKKQHA (365 aa)) is molybdenum cofactor biosynthesis protein A. The Radical SAM core domain maps to 64–276 (SFGRHHTYLR…LQIIRQRWPD (213 aa)). Arg-73 is a binding site for GTP. Residues Cys-80 and Cys-84 each contribute to the [4Fe-4S] cluster site. Residue Tyr-86 coordinates S-adenosyl-L-methionine. Cys-87 lines the [4Fe-4S] cluster pocket. Residue Arg-123 participates in GTP binding. Gly-127 contributes to the S-adenosyl-L-methionine binding site. Thr-154 contacts GTP. Ser-178 contacts S-adenosyl-L-methionine. Lys-214 contacts GTP. Met-248 is a binding site for S-adenosyl-L-methionine. The [4Fe-4S] cluster site is built by Cys-311 and Cys-314. 316–318 (RLR) provides a ligand contact to GTP. Cys-328 contacts [4Fe-4S] cluster. The For molybdenum cofactor biosynthesis protein C activity role is filled by Asp-525.

In the C-terminal section; belongs to the MoaC family. The protein in the N-terminal section; belongs to the radical SAM superfamily. MoaA family. In terms of assembly, isoform Mocs1a and isoform Mocs1b probably form a heterooligomer. Requires [4Fe-4S] cluster as cofactor.

It carries out the reaction GTP + AH2 + S-adenosyl-L-methionine = (8S)-3',8-cyclo-7,8-dihydroguanosine 5'-triphosphate + 5'-deoxyadenosine + L-methionine + A + H(+). The enzyme catalyses (8S)-3',8-cyclo-7,8-dihydroguanosine 5'-triphosphate = cyclic pyranopterin phosphate + diphosphate. Its pathway is cofactor biosynthesis; molybdopterin biosynthesis. Isoform Mocs1a and isoform Mocs1b probably form a complex that catalyzes the conversion of 5'-GTP to cyclic pyranopterin monophosphate (cPMP). Mocs1a catalyzes the cyclization of GTP to (8S)-3',8-cyclo-7,8-dihydroguanosine 5'-triphosphate and Mocs1b catalyzes the subsequent conversion of (8S)-3',8-cyclo-7,8-dihydroguanosine 5'-triphosphate to cPMP. In Drosophila melanogaster (Fruit fly), this protein is Molybdenum cofactor biosynthesis protein 1 (Mocs1).